We begin with the raw amino-acid sequence, 274 residues long: Orotidine 5'-phosphate decarboxylase (274 aa).

The active-site Proton donor is lysine 95.

Belongs to the OMP decarboxylase family. Type 2 subfamily.

The catalysed reaction is orotidine 5'-phosphate + H(+) = UMP + CO2. The protein operates within pyrimidine metabolism; UMP biosynthesis via de novo pathway; UMP from orotate: step 2/2. The chain is Orotidine 5'-phosphate decarboxylase from Paracidovorax citrulli (strain AAC00-1) (Acidovorax citrulli).